The sequence spans 110 residues: Large ribosomal subunit protein uL22 (110 aa).

The protein belongs to the universal ribosomal protein uL22 family. In terms of assembly, part of the 50S ribosomal subunit.

Functionally, this protein binds specifically to 23S rRNA; its binding is stimulated by other ribosomal proteins, e.g. L4, L17, and L20. It is important during the early stages of 50S assembly. It makes multiple contacts with different domains of the 23S rRNA in the assembled 50S subunit and ribosome. The globular domain of the protein is located near the polypeptide exit tunnel on the outside of the subunit, while an extended beta-hairpin is found that lines the wall of the exit tunnel in the center of the 70S ribosome. The polypeptide is Large ribosomal subunit protein uL22 (Leptospira borgpetersenii serovar Hardjo-bovis (strain JB197)).